The chain runs to 207 residues: Thiamine-phosphate synthase (207 aa).

4-amino-2-methyl-5-(diphosphooxymethyl)pyrimidine is bound by residues 36-40 (QLRMK) and Asn-68. The Mg(2+) site is built by Asp-69 and Asp-88. A 4-amino-2-methyl-5-(diphosphooxymethyl)pyrimidine-binding site is contributed by Ser-106. A 2-[(2R,5Z)-2-carboxy-4-methylthiazol-5(2H)-ylidene]ethyl phosphate-binding site is contributed by 132-134 (TNT). Lys-135 is a 4-amino-2-methyl-5-(diphosphooxymethyl)pyrimidine binding site. 2-[(2R,5Z)-2-carboxy-4-methylthiazol-5(2H)-ylidene]ethyl phosphate contacts are provided by residues Gly-162 and 182-183 (VS).

This sequence belongs to the thiamine-phosphate synthase family. It depends on Mg(2+) as a cofactor.

It catalyses the reaction 2-[(2R,5Z)-2-carboxy-4-methylthiazol-5(2H)-ylidene]ethyl phosphate + 4-amino-2-methyl-5-(diphosphooxymethyl)pyrimidine + 2 H(+) = thiamine phosphate + CO2 + diphosphate. The catalysed reaction is 2-(2-carboxy-4-methylthiazol-5-yl)ethyl phosphate + 4-amino-2-methyl-5-(diphosphooxymethyl)pyrimidine + 2 H(+) = thiamine phosphate + CO2 + diphosphate. The enzyme catalyses 4-methyl-5-(2-phosphooxyethyl)-thiazole + 4-amino-2-methyl-5-(diphosphooxymethyl)pyrimidine + H(+) = thiamine phosphate + diphosphate. It participates in cofactor biosynthesis; thiamine diphosphate biosynthesis; thiamine phosphate from 4-amino-2-methyl-5-diphosphomethylpyrimidine and 4-methyl-5-(2-phosphoethyl)-thiazole: step 1/1. Functionally, condenses 4-methyl-5-(beta-hydroxyethyl)thiazole monophosphate (THZ-P) and 2-methyl-4-amino-5-hydroxymethyl pyrimidine pyrophosphate (HMP-PP) to form thiamine monophosphate (TMP). The chain is Thiamine-phosphate synthase from Methanococcus maripaludis (strain C5 / ATCC BAA-1333).